A 155-amino-acid polypeptide reads, in one-letter code: Photosystem I reaction center subunit XI (155 aa).

2 consecutive transmembrane segments (helical) span residues 80–102 and 117–139; these read LISGIALILVATACLAAYGLVSF and GWSQFTAGFFVGAMGSAFVAFFL.

Belongs to the PsaL family.

It localises to the cellular thylakoid membrane. The chain is Photosystem I reaction center subunit XI from Thermosynechococcus vestitus (strain NIES-2133 / IAM M-273 / BP-1).